A 211-amino-acid chain; its full sequence is FMN-dependent NADH:quinone oxidoreductase (211 aa).

FMN is bound by residues 17–19 (SYS) and 102–105 (MWNF).

It belongs to the azoreductase type 1 family. In terms of assembly, homodimer. The cofactor is FMN.

It catalyses the reaction 2 a quinone + NADH + H(+) = 2 a 1,4-benzosemiquinone + NAD(+). It carries out the reaction N,N-dimethyl-1,4-phenylenediamine + anthranilate + 2 NAD(+) = 2-(4-dimethylaminophenyl)diazenylbenzoate + 2 NADH + 2 H(+). In terms of biological role, quinone reductase that provides resistance to thiol-specific stress caused by electrophilic quinones. Also exhibits azoreductase activity. Catalyzes the reductive cleavage of the azo bond in aromatic azo compounds to the corresponding amines. In Geobacillus kaustophilus (strain HTA426), this protein is FMN-dependent NADH:quinone oxidoreductase.